Here is a 422-residue protein sequence, read N- to C-terminus: Acetyl-CoA acetyltransferase, mitochondrial (422 aa).

The transit peptide at 1–28 (MPVLAALLRRGPLLQRRVQEIRYAERSY) directs the protein to the mitochondrion. K61 bears the N6-acetyllysine; alternate mark. N6-succinyllysine; alternate is present on K61. N6-succinyllysine is present on K73. The active-site Acyl-thioester intermediate is the C121. 4 positions are modified to N6-acetyllysine; alternate: K169, K176, K185, and K197. An N6-succinyllysine; alternate mark is found at K169, K176, K185, and K197. CoA is bound at residue Y214. Y214 provides a ligand contact to K(+). The residue at position 218 (K218) is an N6-acetyllysine; alternate. Residue K218 is modified to N6-succinyllysine; alternate. Residue K238 is modified to N6-succinyllysine. K240 carries the post-translational modification N6-acetyllysine; alternate. At K240 the chain carries N6-succinyllysine; alternate. N6-acetyllysine occurs at positions 246 and 252. Residues 253-255 (RVD) and K258 contribute to the CoA site. Position 258 is an N6-acetyllysine; alternate (K258). Position 258 is an N6-succinyllysine; alternate (K258). 2 positions are modified to N6-succinyllysine: K261 and K263. K(+) contacts are provided by A275, A276, and A278. S279 serves as a coordination point for CoA. Residue K333 is modified to N6-acetyllysine. V376 lines the K(+) pocket. The Proton donor/acceptor role is filled by C408.

Belongs to the thiolase-like superfamily. Thiolase family. In terms of assembly, homotetramer. Succinylation at Lys-263, adjacent to a coenzyme A binding site. Desuccinylated by SIRT5.

The protein localises to the mitochondrion. It catalyses the reaction 2 acetyl-CoA = acetoacetyl-CoA + CoA. The catalysed reaction is propanoyl-CoA + acetyl-CoA = 2-methyl-3-oxobutanoyl-CoA + CoA. It participates in lipid metabolism; fatty acid beta-oxidation. With respect to regulation, activated by potassium ions, but not sodium ions. In terms of biological role, this is one of the enzymes that catalyzes the last step of the mitochondrial beta-oxidation pathway, an aerobic process breaking down fatty acids into acetyl-CoA. Using free coenzyme A/CoA, catalyzes the thiolytic cleavage of medium- to long-chain 3-oxoacyl-CoAs into acetyl-CoA and a fatty acyl-CoA shortened by two carbon atoms. The activity of the enzyme is reversible and it can also catalyze the condensation of two acetyl-CoA molecules into acetoacetyl-CoA. Thereby, it plays a major role in ketone body metabolism. This Bos taurus (Bovine) protein is Acetyl-CoA acetyltransferase, mitochondrial (ACAT1).